Here is a 328-residue protein sequence, read N- to C-terminus: Malate dehydrogenase (328 aa).

NAD(+) is bound at residue 12–18 (GAAGQIA). Substrate is bound by residues arginine 93 and arginine 99. NAD(+) is bound by residues asparagine 106, glutamine 113, and 130–132 (VGN). Substrate-binding residues include asparagine 132 and arginine 163. Histidine 188 (proton acceptor) is an active-site residue.

Belongs to the LDH/MDH superfamily. MDH type 2 family.

The enzyme catalyses (S)-malate + NAD(+) = oxaloacetate + NADH + H(+). Catalyzes the reversible oxidation of malate to oxaloacetate. The polypeptide is Malate dehydrogenase (Burkholderia multivorans (strain ATCC 17616 / 249)).